The primary structure comprises 62 residues: Large ribosomal subunit protein bL28 (62 aa).

It belongs to the bacterial ribosomal protein bL28 family.

This is Large ribosomal subunit protein bL28 from Helicobacter pylori (strain HPAG1).